The sequence spans 387 residues: Succinate--CoA ligase [ADP-forming] subunit beta (387 aa).

The 236-residue stretch at 9–244 (KRLLAEEGVP…STQQDGREIT (236 aa)) folds into the ATP-grasp domain. ATP contacts are provided by residues Lys46, 53-55 (GRG), Glu99, Ser102, and Glu107. Asn199 and Asp213 together coordinate Mg(2+). Substrate-binding positions include Asn264 and 321-323 (GIT).

This sequence belongs to the succinate/malate CoA ligase beta subunit family. As to quaternary structure, heterotetramer of two alpha and two beta subunits. It depends on Mg(2+) as a cofactor.

It carries out the reaction succinate + ATP + CoA = succinyl-CoA + ADP + phosphate. The enzyme catalyses GTP + succinate + CoA = succinyl-CoA + GDP + phosphate. The protein operates within carbohydrate metabolism; tricarboxylic acid cycle; succinate from succinyl-CoA (ligase route): step 1/1. Functionally, succinyl-CoA synthetase functions in the citric acid cycle (TCA), coupling the hydrolysis of succinyl-CoA to the synthesis of either ATP or GTP and thus represents the only step of substrate-level phosphorylation in the TCA. The beta subunit provides nucleotide specificity of the enzyme and binds the substrate succinate, while the binding sites for coenzyme A and phosphate are found in the alpha subunit. The protein is Succinate--CoA ligase [ADP-forming] subunit beta of Acidithiobacillus ferrooxidans (strain ATCC 23270 / DSM 14882 / CIP 104768 / NCIMB 8455) (Ferrobacillus ferrooxidans (strain ATCC 23270)).